The following is a 192-amino-acid chain: Potassium-transporting ATPase KdpC subunit (192 aa).

A helical membrane pass occupies residues 7-27; it reads PLIVIFAVLTAVTGLAYPAVM.

The protein belongs to the KdpC family. As to quaternary structure, the system is composed of three essential subunits: KdpA, KdpB and KdpC.

It is found in the cell inner membrane. Its function is as follows. Part of the high-affinity ATP-driven potassium transport (or Kdp) system, which catalyzes the hydrolysis of ATP coupled with the electrogenic transport of potassium into the cytoplasm. This subunit acts as a catalytic chaperone that increases the ATP-binding affinity of the ATP-hydrolyzing subunit KdpB by the formation of a transient KdpB/KdpC/ATP ternary complex. The protein is Potassium-transporting ATPase KdpC subunit of Paraburkholderia phytofirmans (strain DSM 17436 / LMG 22146 / PsJN) (Burkholderia phytofirmans).